A 476-amino-acid polypeptide reads, in one-letter code: MITDPLKTVHVVGGGLAGSEAAWQIAQAGVRVVLHEMRPARMTEAHRTEGLAELVCSNSFRSDDAANNAVGLLHAEMRKLGSLVMRAADANQVPAGGALAVDRDGFSAAVTKALAEHPLIELQRGELDGLPPSDWGHVVIATGPLTSAPLASAIQALTGEDSLAFFDAIAPIVHRDSIDMSVAWFQSRYDKVGPGGNGADYINCPMTREQYEGFVAALISGDKVDFKDWETNTPYFDGCLPIEVMAERGAETLRFGPMKPVGLTNPKDPTVKPYAIVQLRQDNKLGTLYNLVGFQTKLKHGEQSRIFRSIPGLENAEFARLGGLHRNTFLNSPKLLDQQLRLRAEPRLRFAGQMTGCEGYVESASIGLIAGLYAAAEARDIALAPPPSTTALGALLGHITGGHIETIDAGPRSFQPMNVNFGLFPPLESPPTHGADGKKLRGPDKTVAKKQALSARALADLDGWIAENLPGAAAAA.

An FAD-binding site is contributed by 13–18 (GGGLAG). The disordered stretch occupies residues 425 to 446 (PPLESPPTHGADGKKLRGPDKT). The segment covering 435–446 (ADGKKLRGPDKT) has biased composition (basic and acidic residues).

This sequence belongs to the MnmG family. TrmFO subfamily. FAD is required as a cofactor.

The protein resides in the cytoplasm. It catalyses the reaction uridine(54) in tRNA + (6R)-5,10-methylene-5,6,7,8-tetrahydrofolate + NADH + H(+) = 5-methyluridine(54) in tRNA + (6S)-5,6,7,8-tetrahydrofolate + NAD(+). The catalysed reaction is uridine(54) in tRNA + (6R)-5,10-methylene-5,6,7,8-tetrahydrofolate + NADPH + H(+) = 5-methyluridine(54) in tRNA + (6S)-5,6,7,8-tetrahydrofolate + NADP(+). Its function is as follows. Catalyzes the folate-dependent formation of 5-methyl-uridine at position 54 (M-5-U54) in all tRNAs. This is Methylenetetrahydrofolate--tRNA-(uracil-5-)-methyltransferase TrmFO from Rhodopseudomonas palustris (strain BisB18).